A 728-amino-acid chain; its full sequence is Ophiobolin F synthase oblA (728 aa).

The interval 1–322 is (7Z)-ophiobola-7,19-dien-3-ol synthase; that stretch reads MEYKYSTIVD…RYHFPGRWNE (322 aa). Mg(2+) is bound by residues Asp-93 and Asp-97. Residue Asp-93 participates in substrate binding. The short motif at 93–97 is the DDXXD 1 element; sequence DDEID. Substrate contacts are provided by residues 182–185, Asn-226, 230–234, and 313–314; these read RCMD, SYEKE, and RY. Positions 226-234 match the NSE/DTE motif; sequence NDLFSYEKE. The tract at residues 323-728 is geranylfarnesyl diphosphate synthase; it reads LQKLRAEHGI…LRLMVDMLKV (406 aa). Low complexity predominate over residues 362–371; that stretch reads GINGTNGVNG. Residues 362–394 are disordered; sequence GINGTNGVNGKRNRDEDGDENDARINGNGFKKP. Positions 439, 442, and 471 each coordinate isopentenyl diphosphate. Positions 478 and 482 each coordinate Mg(2+). The DDXXD 2 motif lies at 478–482; the sequence is DDIED. Arg-487 contributes to the dimethylallyl diphosphate binding site. Arg-488 contributes to the isopentenyl diphosphate binding site. Dimethylallyl diphosphate-binding residues include Lys-565, Thr-566, Gln-604, Asn-611, Lys-621, and Lys-631.

In the N-terminal section; belongs to the terpene synthase family. The protein in the C-terminal section; belongs to the FPP/GGPP synthase family. The cofactor is Mg(2+).

The enzyme catalyses isopentenyl diphosphate + (2E,6E)-farnesyl diphosphate = (2E,6E,10E)-geranylgeranyl diphosphate + diphosphate. The catalysed reaction is isopentenyl diphosphate + (2E,6E,10E)-geranylgeranyl diphosphate = (2E,6E,10E,14E)-geranylfarnesyl diphosphate + diphosphate. It catalyses the reaction (2E,6E,10E,14E)-geranylfarnesyl diphosphate + H2O = ophiobolin F + diphosphate. Its pathway is secondary metabolite biosynthesis; terpenoid biosynthesis. Its function is as follows. Bifunctional sesterterpene synthase; part of the gene cluster that mediates the biosynthesis of the sesterterpenes ophiobolins, fungal phytotoxins with potential anti-cancer activities. The first step of the pathway is performed by the sesterterpene synthase oblA that possesses both prenyl transferase and terpene cyclase activity, converting isopentenyl diphosphate and dimethylallyl diphosphate into geranylfarnesyl diphosphate (GFPP) and further converting GFPP into ophiobolin F, respectively. Other sesterterpenoids (C(25) terpenoids) are found as minor products of oblA. The cytochrome P450 monooxygenase oblB then catalyzes a four-step oxidative transformation of ophiobolin F to yield ophiobolin C. The function of the cytochrome P450 monooxygenase oblE has still to be determined. This is Ophiobolin F synthase oblA from Emericella variicolor (Aspergillus stellatus).